The primary structure comprises 329 residues: MTSTVQSPLYSRVFSAVFYGVISVLIVFVNKILLTNYKFPSFLFVGVGQMMATILILFFAKMFRIVQFPSLDSSIPRKIMPLPLLYFFNLISGLGGTQMINLPMFTVLRRFSILMTMILEFYILNVKASKAVKISVGLMIGGSFIAAIYDLSFDALGYTMIFINNICTAALGVYTKQKLDAKDLGKYGLMFYNCLFMLLPALCVVQYTGDLDRAYSFMLSDSMTSSVWTCFLLSCICGFVLNYSLVLCTHHNSALTTTCVGPIKNLFVTYVGMFSSGDYVFQWANFTGINVSVFGSILYTYVTFRSKSTTISYKPLPMTMPIDVHKPRN.

The next 9 helical transmembrane spans lie at 15–34 (SAVF…KILL), 41–63 (SFLF…AKMF), 86–108 (YFFN…FTVL), 129–151 (SKAV…IYDL), 155–174 (ALGY…LGVY), 187–209 (YGLM…QYTG), 224–246 (TSSV…YSLV), 253–275 (SALT…GMFS), and 280–302 (VFQW…YTYV).

This sequence belongs to the TPT transporter family. SLC35D subfamily.

The protein resides in the golgi apparatus membrane. In terms of biological role, acts as a transporter of UDP-glucuronic acid (UDP-GlcA), UDP-N-acetylgalactosamine (UDP-GalNAc) and UDP-galactose (UDP-Gal) from the cytoplasm into the Golgi lumen. Involved in the biosynthesis of glycoconjugates that play a pivotal role in development. Involved in the synthesis of chondroitin sulfate and heparan sulfate proteoglycans. Required for embryonic development. Involved in vulva epithelium invagination and embryonic development. Involved in the directed migration of hermaphrodite-specific neurons. This Caenorhabditis elegans protein is UDP-sugar transporter sqv-7 (sqv-7).